A 287-amino-acid polypeptide reads, in one-letter code: MEIGLREWLIVIGIIVIAGILFDGWRRMRGGKGKLKFRLDRNLSNLPDDDGSAELLGPPRVLDTHKEPQLDEHDLPSMSAPVREAREPSSKRGKRANAGVAEPHQGDLNLDVDEGPSFSSRDDDFPDENAGKNAPRQSVNDQPPAEEVLVISVICRDAAGFKGPALLQNILESGLRFGEMDIFHRHESMAGNGEVLFSMANAVKPGTFDLDDIDLFSTPAVSFFLGLPGPRHPKQAFDVMVAAARKLSQELNGELKDDQRSVLTAQTIEHYRQRIVEFERRALTQKR.

A topological domain (periplasmic) is located at residue M1. Residues 2 to 22 traverse the membrane as a helical segment; sequence EIGLREWLIVIGIIVIAGILF. Residues 23-287 lie on the Cytoplasmic side of the membrane; it reads DGWRRMRGGK…FERRALTQKR (265 aa). Residues 70-143 form a disordered region; sequence LDEHDLPSMS…APRQSVNDQP (74 aa).

It belongs to the ZipA family. In terms of assembly, interacts with FtsZ via their C-terminal domains.

Its subcellular location is the cell inner membrane. Functionally, essential cell division protein that stabilizes the FtsZ protofilaments by cross-linking them and that serves as a cytoplasmic membrane anchor for the Z ring. Also required for the recruitment to the septal ring of downstream cell division proteins. This is Cell division protein ZipA from Pseudomonas fluorescens (strain SBW25).